A 508-amino-acid polypeptide reads, in one-letter code: Photosystem II CP47 reaction center protein (508 aa).

6 consecutive transmembrane segments (helical) span residues 21–36 (SVHI…WAGS), 101–115 (IVFS…IWHW), 140–156 (GIHL…FGAF), 203–218 (IAAG…FHLS), 237–252 (VLSS…AFVV), and 457–472 (SFAL…HGAR).

This sequence belongs to the PsbB/PsbC family. PsbB subfamily. As to quaternary structure, PSII is composed of 1 copy each of membrane proteins PsbA, PsbB, PsbC, PsbD, PsbE, PsbF, PsbH, PsbI, PsbJ, PsbK, PsbL, PsbM, PsbT, PsbX, PsbY, PsbZ, Psb30/Ycf12, at least 3 peripheral proteins of the oxygen-evolving complex and a large number of cofactors. It forms dimeric complexes. Requires Binds multiple chlorophylls. PSII binds additional chlorophylls, carotenoids and specific lipids. as cofactor.

It is found in the plastid. Its subcellular location is the chloroplast thylakoid membrane. In terms of biological role, one of the components of the core complex of photosystem II (PSII). It binds chlorophyll and helps catalyze the primary light-induced photochemical processes of PSII. PSII is a light-driven water:plastoquinone oxidoreductase, using light energy to abstract electrons from H(2)O, generating O(2) and a proton gradient subsequently used for ATP formation. This chain is Photosystem II CP47 reaction center protein, found in Morus indica (Mulberry).